The chain runs to 242 residues: 7-cyano-7-deazaguanine synthase (242 aa).

ATP is bound at residue 12–22 (FSGGQDSATCL). Zn(2+) contacts are provided by Cys200, Cys215, Cys218, and Cys221.

This sequence belongs to the QueC family. The cofactor is Zn(2+).

The catalysed reaction is 7-carboxy-7-deazaguanine + NH4(+) + ATP = 7-cyano-7-deazaguanine + ADP + phosphate + H2O + H(+). The protein operates within purine metabolism; 7-cyano-7-deazaguanine biosynthesis. Functionally, catalyzes the ATP-dependent conversion of 7-carboxy-7-deazaguanine (CDG) to 7-cyano-7-deazaguanine (preQ(0)). This Gluconobacter oxydans (strain 621H) (Gluconobacter suboxydans) protein is 7-cyano-7-deazaguanine synthase.